The sequence spans 386 residues: Zinc finger CCCH domain-containing protein 39 (386 aa).

Positions 1 to 90 (MDSSYSDSRP…SSSNPWMVPS (90 aa)) are disordered. Residues 20–37 (WNQTQMIDSMANPMNNEQ) show a composition bias toward polar residues. The span at 43–58 (LSESQSQSQPSQQLQP) shows a compositional bias: low complexity. The span at 72–85 (NPASSFPQPSSSNP) shows a compositional bias: polar residues. The segment at 104–131 (FYKTRMCAKFRAGTCRNGELCNFAHGIE) adopts a C3H1-type 1 zinc-finger fold. The disordered stretch occupies residues 136–166 (PPSNWQEIVGPPPAGQDRERERERERERERP). A compositionally biased stretch (basic and acidic residues) spans 151–166 (QDRERERERERERERP). 2 consecutive C3H1-type zinc fingers follow at residues 183–211 (ILRM…HEDL) and 269–297 (YWKT…HGQA).

This Arabidopsis thaliana (Mouse-ear cress) protein is Zinc finger CCCH domain-containing protein 39.